The sequence spans 338 residues: E3 ubiquitin-protein ligase SPL1 (338 aa).

The chain crosses the membrane as a helical span at residues Met1 to Arg21. Topologically, residues Ser22–Lys223 are chloroplast intermembrane. A helical transmembrane segment spans residues Tyr224–Leu246. Topologically, residues Lys247–His338 are cytoplasmic. Residues Cys291 to Arg326 form an RING-type zinc finger.

It localises to the plastid. The protein resides in the chloroplast outer membrane. The enzyme catalyses S-ubiquitinyl-[E2 ubiquitin-conjugating enzyme]-L-cysteine + [acceptor protein]-L-lysine = [E2 ubiquitin-conjugating enzyme]-L-cysteine + N(6)-ubiquitinyl-[acceptor protein]-L-lysine.. It participates in protein modification; protein ubiquitination. Functionally, possesses E3 ubiquitin-protein ligase activity. This chain is E3 ubiquitin-protein ligase SPL1, found in Arabidopsis thaliana (Mouse-ear cress).